The sequence spans 826 residues: Lysine-specific histone demethylase 1B (826 aa).

Positions 1 to 11 are enriched in basic residues; the sequence is MAASRGRSKKR. Residues 1–46 form a disordered region; that stretch reads MAASRGRSKKRSNLELSPDNLPLRSSGRQAKKKAVEIPDEDEDGSS. Serine 17 and serine 26 each carry phosphoserine. 12 residues coordinate Zn(2+): cysteine 53, cysteine 58, cysteine 65, cysteine 73, histidine 84, histidine 90, cysteine 92, cysteine 95, cysteine 142, cysteine 147, cysteine 169, and cysteine 185. The CW-type zinc-finger motif lies at 133–193; the sequence is DQQLPYWVQC…HCSFPEDLRV (61 aa). Serine 253 is modified (phosphoserine). The segment at 279–298 is GLYR1-binding; that stretch reads YQPNECGKALCVRPDVMELD. Residues 281–379 form the SWIRM domain; it reads PNECGKALCV…TGVLTVAAGQ (99 aa). Residue 389–445 participates in FAD binding; it reads KSVLVVGAGPAGLAAARQLHNFGMKVTVLEAKDRIGGRVWDDKSFKGVVVGRGPQIV. 3 histone H3-binding regions span residues 444-473, 493-504, and 544-578; these read IVNG…RCDL, FNALLDVVSEWR, and FHLS…AGDH. Positions 570 to 572 are GLYR1-binding; sequence FFA. Residues valine 604, glutamate 799, and 807–809 contribute to the FAD site; that span reads QTV. The tract at residues 802 to 818 is GLYR1-binding; that stretch reads NRHFPQTVTGAYLSGVR.

Belongs to the flavin monoamine oxidase family. In terms of assembly, interacts with its cofactor GLYR1 at nucleosomes; this interaction stimulates H3K4me1 and H3K4me2 demethylation. In contrast to KDM1A, does not form a complex with RCOR1/CoREST. Possible accessory component of the polycomb repressive deubiquitinase (PR-DUB) complex, at least composed of BAP1, one of ASXL1, ASXL2 or (probably) ASXL3 and one of MBD5 or MBD6. The PR-DUB core associates with a number of accessory proteins, including FOXK1, FOXK2, KDM1B, HCFC1 and OGT; KDM1B specifically associates with ASXL2 PR-DUB complexes. Requires FAD as cofactor. The cofactor is Zn(2+). As to expression, expressed in growing oocytes and in intestinal gland.

Its subcellular location is the nucleus. It is found in the chromosome. The enzyme catalyses N(6),N(6)-dimethyl-L-lysyl(4)-[histone H3] + 2 A + 2 H2O = L-lysyl(4)-[histone H3] + 2 formaldehyde + 2 AH2. It catalyses the reaction N(6)-methyl-L-lysyl(4)-[histone H3] + A + H2O = L-lysyl(4)-[histone H3] + formaldehyde + AH2. Inhibited by tranylcypromine, but not by pargyline, deprenyl or rasagiline. Histone H3K4me1 and H3K4me2 demethylase activity is inhibited by DNA, this inhibition is released in complex with GLYR1. In terms of biological role, histone demethylase that demethylates 'Lys-4' of histone H3, a specific tag for epigenetic transcriptional activation, thereby acting as a corepressor. Required for de novo DNA methylation of a subset of imprinted genes during oogenesis. Acts by oxidizing the substrate by FAD to generate the corresponding imine that is subsequently hydrolyzed. Demethylates both mono- and di-methylated 'Lys-4' of histone H3. Has no effect on tri-methylated 'Lys-4', mono-, di- or tri-methylated 'Lys-9', mono-, di- or tri-methylated 'Lys-27', mono-, di- or tri-methylated 'Lys-36' of histone H3, or on mono-, di- or tri-methylated 'Lys-20' of histone H4. Its function is as follows. Histone demethylase that demethylates 'Lys-4' of histone H3, a specific tag for epigenetic transcriptional activation, thereby acting as a corepressor. Required for de novo DNA methylation of a subset of imprinted genes during oogenesis. Acts by oxidizing the substrate by FAD to generate the corresponding imine that is subsequently hydrolyzed. Demethylates both mono- and di-methylated 'Lys-4' of histone H3. Has no effect on tri-methylated 'Lys-4', mono-, di- or tri-methylated 'Lys-9', mono-, di- or tri-methylated 'Lys-27', mono-, di- or tri-methylated 'Lys-36' of histone H3, or on mono-, di- or tri-methylated 'Lys-20' of histone H4. Alone, it is unable to demethylate H3K4me on nucleosomes and requires the presence of GLYR1 to achieve such activity, they form a multifunctional enzyme complex that modifies transcribed chromatin and facilitates Pol II transcription through nucleosomes. The chain is Lysine-specific histone demethylase 1B from Mus musculus (Mouse).